The sequence spans 96 residues: Prokineticin Bm8-a (96 aa).

Residues 1–19 (MKCFAQIVVLLLVIAFSHG) form the signal peptide. Disulfide bonds link Cys26–Cys38, Cys32–Cys50, Cys37–Cys78, Cys60–Cys86, and Cys80–Cys95.

It belongs to the AVIT (prokineticin) family. Expressed by the skin glands.

The protein resides in the secreted. Its function is as follows. Potent agonist for both PKR1/PROKR1 and PKR2/PROKR2, and inducer of a potent and long-lasting hyperalgesia. Also potentiates capsaicin-induced TRPV1 current, when tested on DRG neurons. At subnanomolar concentrations, this protein both induces potent chemotaxis of macrophages and stimulates LPS-induced production of the pro-inflammatory cytokines IL-1 and IL-12. In vivo, potently stimulates the contraction of the guinea-pig gastrointestinal (GI) smooth muscle (nanomolar concentration). In Bombina maxima (Giant fire-bellied toad), this protein is Prokineticin Bm8-a.